The chain runs to 148 residues: Putative nickel-responsive regulator (148 aa).

Ni(2+)-binding residues include histidine 76, histidine 87, histidine 89, and cysteine 95.

It belongs to the transcriptional regulatory CopG/NikR family. Ni(2+) is required as a cofactor.

In terms of biological role, transcriptional regulator. In Rhodopseudomonas palustris (strain ATCC BAA-98 / CGA009), this protein is Putative nickel-responsive regulator.